The primary structure comprises 1099 residues: Solute carrier family 38 member 10 (1099 aa).

The next 10 helical transmembrane spans lie at W9–F31, I36–V58, L84–I104, T123–Q143, F153–F173, I229–Y249, M272–C292, V323–E343, I345–I365, and V378–S398. Disordered stretches follow at residues D440 to G679 and E720 to K1047. S441 carries the post-translational modification Phosphoserine. Composition is skewed to basic and acidic residues over residues S441–L454, E493–V508, P517–D528, E544–E561, and P586–H599. S607 and S635 each carry phosphoserine. 3 stretches are compositionally biased toward basic and acidic residues: residues E653–A663, E720–P735, and G749–E766. Positions V698 to K734 form a coiled coil. Position 767 is a phosphothreonine (T767). 5 stretches are compositionally biased toward basic and acidic residues: residues K793–K802, E852–K894, E917–P928, K957–G969, and Q1010–K1022. At S886 the chain carries Phosphoserine.

The protein belongs to the amino acid/polyamine transporter 2 family. In terms of tissue distribution, only expressed in the pituitary, adrenal gland, stomach and in the upper gastrointestinal tract.

The protein resides in the membrane. It catalyses the reaction L-glutamate(out) = L-glutamate(in). It carries out the reaction L-glutamine(out) = L-glutamine(in). The enzyme catalyses L-alanine(in) = L-alanine(out). The catalysed reaction is L-serine(in) = L-serine(out). It catalyses the reaction L-leucine(in) = L-leucine(out). Its function is as follows. Facilitates bidirectional transport of amino acids. May act as a glutamate sensor that regulates glutamate-glutamine cycle and mTOR signaling in the brain. The transport mechanism remains to be elucidated. The protein is Solute carrier family 38 member 10 of Rattus norvegicus (Rat).